Consider the following 284-residue polypeptide: Pheromone-regulated membrane protein 4 (284 aa).

A helical membrane pass occupies residues 20 to 38; sequence IISLTLVLLGVFSFLLLTW. Positions 157 to 272 constitute a Glutaredoxin domain; the sequence is RTDFLDIIRT…PLLKSEARGN (116 aa).

The protein resides in the membrane. This is Pheromone-regulated membrane protein 4 (PRM4) from Saccharomyces cerevisiae (strain ATCC 204508 / S288c) (Baker's yeast).